Here is an 819-residue protein sequence, read N- to C-terminus: THO complex subunit 5B (819 aa).

The interval 285-332 is disordered; sequence ARQQSRKDSGMSSNTESSRLEDDGPDDDDDGQRRRKRPKKLTSKEGSD.

The protein belongs to the THOC5 family. In terms of assembly, component of the THO complex, which is composed of THO1, THO2, THO3, THO5, THO6 and THO7.

It localises to the nucleus. In terms of biological role, acts as a component of the THO subcomplex of the TREX complex which is thought to couple mRNA transcription, processing and nuclear export. This Arabidopsis thaliana (Mouse-ear cress) protein is THO complex subunit 5B (THO5B).